Here is a 480-residue protein sequence, read N- to C-terminus: Proline--tRNA ligase (480 aa).

Belongs to the class-II aminoacyl-tRNA synthetase family. ProS type 3 subfamily. Homodimer.

The protein localises to the cytoplasm. The catalysed reaction is tRNA(Pro) + L-proline + ATP = L-prolyl-tRNA(Pro) + AMP + diphosphate. Functionally, catalyzes the attachment of proline to tRNA(Pro) in a two-step reaction: proline is first activated by ATP to form Pro-AMP and then transferred to the acceptor end of tRNA(Pro). The protein is Proline--tRNA ligase of Chloroflexus aggregans (strain MD-66 / DSM 9485).